Reading from the N-terminus, the 72-residue chain is Large ribosomal subunit protein uL30 (72 aa).

This sequence belongs to the universal ribosomal protein uL30 family. Part of the 50S ribosomal subunit.

This Mycobacterium ulcerans (strain Agy99) protein is Large ribosomal subunit protein uL30.